A 427-amino-acid chain; its full sequence is Phosphoglucosamine mutase (427 aa).

Ser94 (phosphoserine intermediate) is an active-site residue. Mg(2+)-binding residues include Ser94, Asp228, Asp230, and Asp232. Ser94 carries the post-translational modification Phosphoserine.

The protein belongs to the phosphohexose mutase family. Requires Mg(2+) as cofactor. Activated by phosphorylation.

It catalyses the reaction alpha-D-glucosamine 1-phosphate = D-glucosamine 6-phosphate. In terms of biological role, catalyzes the conversion of glucosamine-6-phosphate to glucosamine-1-phosphate. The sequence is that of Phosphoglucosamine mutase from Thermotoga sp. (strain RQ2).